The primary structure comprises 361 residues: Zinc transporter ZIP13 (361 aa).

Residues 1 to 6 (MPGCPC) are Lumenal-facing. Residues 7-27 (PGCGMAGQRLLFLTVLALELL) form a helical membrane-spanning segment. Over 28-68 (ERAGGSQPALRSLGAAAACRLDSKESESWGALLSGERLDTW) the chain is Cytoplasmic. Residues 69 to 89 (ICSLLGSLMVGLSGVFPLLVI) form a helical membrane-spanning segment. Residues 90–108 (PLEMGTMLQSEAGAWRLKQ) are Lumenal-facing. A helical transmembrane segment spans residues 109 to 129 (LLSFALGGLLGNVFLHLLPEA). Topologically, residues 130 to 150 (WAYTCNISPGVEGQSLQRQQQ) are cytoplasmic. The helical transmembrane segment at 151 to 171 (LGLWVIAGFLTFLALEKMFLN) threads the bilayer. The Lumenal segment spans residues 172–233 (CKEEDPSQAP…TIDNFTHGLA (62 aa)). Residues 234 to 254 (VAASFLVSKKIGLLTTMAILL) form a helical membrane-spanning segment. The short motif at 255–260 (HEIPHE) is the XEXPHE-motif element. The Cytoplasmic segment spans residues 255 to 276 (HEIPHEVGDFAILLRAGFDRWT). The helical transmembrane segment at 277–297 (AAKLQFSTALGGLLGACFAIC) threads the bilayer. Residues 298 to 307 (TQSPKGVEET) lie on the Lumenal side of the membrane. The chain crosses the membrane as a helical span at residues 308–328 (VVWTLPFTSGGFLYVALVNVL). The Cytoplasmic segment spans residues 329 to 340 (PDLLEEDDPWHL). The helical transmembrane segment at 341-361 (NPPLPTGTPCSRCCCSAPVSW) threads the bilayer.

This sequence belongs to the ZIP transporter (TC 2.A.5) family. In terms of assembly, homodimer.

Its subcellular location is the golgi apparatus membrane. The protein localises to the cytoplasmic vesicle membrane. It localises to the endoplasmic reticulum membrane. The enzyme catalyses Zn(2+)(in) = Zn(2+)(out). Its function is as follows. Functions as a zinc transporter transporting Zn(2+) from the Golgi apparatus to the cytosol and thus influences the zinc level at least in areas of the cytosol. May regulate beige adipocyte differentiation. The protein is Zinc transporter ZIP13 of Rattus norvegicus (Rat).